A 573-amino-acid chain; its full sequence is CTP synthase (573 aa).

Positions 1–281 (MGQTRIQART…DAYVVRRLGL (281 aa)) are amidoligase domain. Ser-23 lines the CTP pocket. Ser-23 is a UTP binding site. Residues 24 to 29 (SLGKGL) and Asp-81 contribute to the ATP site. Residues Asp-81 and Glu-155 each coordinate Mg(2+). Residues 162-164 (DIE), 202-207 (KTKPTQ), and Lys-238 each bind CTP. Residues 202 to 207 (KTKPTQ) and Lys-238 contribute to the UTP site. Residues 306–554 (EVALVGKYVD…IAAALKYKLA (249 aa)) enclose the Glutamine amidotransferase type-1 domain. An L-glutamine-binding site is contributed by Gly-369. Cys-396 (nucleophile; for glutamine hydrolysis) is an active-site residue. L-glutamine is bound by residues 397 to 400 (LGLQ), Glu-419, and Arg-480. Catalysis depends on residues His-527 and Glu-529.

It belongs to the CTP synthase family. In terms of assembly, homotetramer.

It catalyses the reaction UTP + L-glutamine + ATP + H2O = CTP + L-glutamate + ADP + phosphate + 2 H(+). The catalysed reaction is L-glutamine + H2O = L-glutamate + NH4(+). The enzyme catalyses UTP + NH4(+) + ATP = CTP + ADP + phosphate + 2 H(+). It participates in pyrimidine metabolism; CTP biosynthesis via de novo pathway; CTP from UDP: step 2/2. Its activity is regulated as follows. Allosterically activated by GTP, when glutamine is the substrate; GTP has no effect on the reaction when ammonia is the substrate. The allosteric effector GTP functions by stabilizing the protein conformation that binds the tetrahedral intermediate(s) formed during glutamine hydrolysis. Inhibited by the product CTP, via allosteric rather than competitive inhibition. In terms of biological role, catalyzes the ATP-dependent amination of UTP to CTP with either L-glutamine or ammonia as the source of nitrogen. Regulates intracellular CTP levels through interactions with the four ribonucleotide triphosphates. In Nocardia farcinica (strain IFM 10152), this protein is CTP synthase.